Here is a 366-residue protein sequence, read N- to C-terminus: MTKITLSDLPLREELRGEHAYGAPQLNVDIRLNTNENPYPPSEALVADLVATVDKIATELNRYPERDAVELRDELAAYITKQTGVAVTRDNLWAANGSNEILQQLLQAFGGPGRTALGFQPSYSMHPILAKGTHTEFIAVSRGADFRIDMDVALEEIRAKQPDIVFVTTPNNPTGDVTSLDDVERIINVAPGIVIVDEAYAEFSPSPSATTLLEKYPTKLVVSRTMSKAFDFAGGRLGYFVANPAFIDAVMLVRLPYHLSALSQAAAIVALRHSADTLGTVEKLSVERVRVAARLEELGYAVVPSESNFVFFGDFSDQHAAWQAFLDRGVLIRDVGIAGHLRTTIGVPEENDAFLDAAAEIIKLNL.

Lys-228 bears the N6-(pyridoxal phosphate)lysine mark.

The protein belongs to the class-II pyridoxal-phosphate-dependent aminotransferase family. Histidinol-phosphate aminotransferase subfamily. In terms of assembly, homodimer. The cofactor is pyridoxal 5'-phosphate.

The catalysed reaction is L-histidinol phosphate + 2-oxoglutarate = 3-(imidazol-4-yl)-2-oxopropyl phosphate + L-glutamate. The protein operates within amino-acid biosynthesis; L-histidine biosynthesis; L-histidine from 5-phospho-alpha-D-ribose 1-diphosphate: step 7/9. This Corynebacterium glutamicum (strain ATCC 13032 / DSM 20300 / JCM 1318 / BCRC 11384 / CCUG 27702 / LMG 3730 / NBRC 12168 / NCIMB 10025 / NRRL B-2784 / 534) protein is Histidinol-phosphate aminotransferase.